Consider the following 604-residue polypeptide: 3-hydroxy-3-methylglutaryl-coenzyme A reductase 2 (604 aa).

Helical transmembrane passes span Leu47–Leu67 and Ala91–Val111. The linker stretch occupies residues Gln112–Glu188. A glycan (N-linked (GlcNAc...) asparagine) is linked at Asn120. The catalytic stretch occupies residues Glu189–Ser604. The active-site Charge relay system is the Glu283. N-linked (GlcNAc...) asparagine glycosylation occurs at Asn347. The Charge relay system role is filled by Lys415. An N-linked (GlcNAc...) asparagine glycan is attached at Asn460. Catalysis depends on Asp491, which acts as the Charge relay system. His589 acts as the Proton donor in catalysis. Asn593 carries N-linked (GlcNAc...) asparagine glycosylation.

The protein belongs to the HMG-CoA reductase family.

It localises to the endoplasmic reticulum membrane. The catalysed reaction is (R)-mevalonate + 2 NADP(+) + CoA = (3S)-3-hydroxy-3-methylglutaryl-CoA + 2 NADPH + 2 H(+). Its pathway is metabolic intermediate biosynthesis; (R)-mevalonate biosynthesis; (R)-mevalonate from acetyl-CoA: step 3/3. Functionally, catalyzes the synthesis of mevalonate. The specific precursor of all isoprenoid compounds present in plants. This is 3-hydroxy-3-methylglutaryl-coenzyme A reductase 2 (HMGR2) from Capsicum annuum (Capsicum pepper).